The chain runs to 335 residues: Rho guanine nucleotide exchange factor 39 (335 aa).

One can recognise a DH domain in the interval 22-197 (KRACTARELL…SETAQRVHTI (176 aa)). The PH domain occupies 227 to 331 (WFLRQGWLLV…WYHSLTLAIS (105 aa)).

The protein resides in the cell membrane. Functionally, promotes cell proliferation. This chain is Rho guanine nucleotide exchange factor 39 (ARHGEF39), found in Bos taurus (Bovine).